The chain runs to 139 residues: Aspartate 1-decarboxylase (139 aa).

Ser-25 functions as the Schiff-base intermediate with substrate; via pyruvic acid in the catalytic mechanism. Pyruvic acid (Ser) is present on Ser-25. Thr-57 contributes to the substrate binding site. Tyr-58 serves as the catalytic Proton donor. 73 to 75 contacts substrate; it reads GAA. A disordered region spans residues 117–139; it reads LGADPAEPVPGSDQARSPQAVTA. Over residues 130 to 139 the composition is skewed to polar residues; that stretch reads QARSPQAVTA.

Belongs to the PanD family. Heterooctamer of four alpha and four beta subunits. Pyruvate is required as a cofactor. Post-translationally, is synthesized initially as an inactive proenzyme, which is activated by self-cleavage at a specific serine bond to produce a beta-subunit with a hydroxyl group at its C-terminus and an alpha-subunit with a pyruvoyl group at its N-terminus.

Its subcellular location is the cytoplasm. It catalyses the reaction L-aspartate + H(+) = beta-alanine + CO2. The protein operates within cofactor biosynthesis; (R)-pantothenate biosynthesis; beta-alanine from L-aspartate: step 1/1. In terms of biological role, catalyzes the pyruvoyl-dependent decarboxylation of aspartate to produce beta-alanine. The chain is Aspartate 1-decarboxylase from Streptomyces avermitilis (strain ATCC 31267 / DSM 46492 / JCM 5070 / NBRC 14893 / NCIMB 12804 / NRRL 8165 / MA-4680).